The sequence spans 78 residues: Acyl carrier protein (78 aa).

A Carrier domain is found at 2–77; sequence SDIEARVKKI…NAIDYANTHQ (76 aa). O-(pantetheine 4'-phosphoryl)serine is present on Ser37.

This sequence belongs to the acyl carrier protein (ACP) family. Post-translationally, 4'-phosphopantetheine is transferred from CoA to a specific serine of apo-ACP by AcpS. This modification is essential for activity because fatty acids are bound in thioester linkage to the sulfhydryl of the prosthetic group.

Its subcellular location is the cytoplasm. Its pathway is lipid metabolism; fatty acid biosynthesis. Carrier of the growing fatty acid chain in fatty acid biosynthesis. This Comamonas testosteroni (Pseudomonas testosteroni) protein is Acyl carrier protein.